Consider the following 240-residue polypeptide: Pathogenesis-related thaumatin-like protein 3.5 (240 aa).

An N-terminal signal peptide occupies residues 1–20 (MASLRLATLAMMVLFGSCRA). Intrachain disulfides connect Cys31–Cys237, Cys79–Cys89, Cys94–Cys100, Cys145–Cys227, Cys150–Cys210, Cys158–Cys173, Cys177–Cys186, and Cys187–Cys197.

Belongs to the thaumatin family. In terms of tissue distribution, strongly expressed in pollen grains. Also present at weak levels in seedling roots, in sapling stems and in developing male strobili.

Functionally, may be involved in disease resistance. This chain is Pathogenesis-related thaumatin-like protein 3.5, found in Cryptomeria japonica (Japanese cedar).